Reading from the N-terminus, the 158-residue chain is Glutathione peroxidase homolog BsaA (158 aa).

Residue Cys36 is part of the active site.

This sequence belongs to the glutathione peroxidase family.

The polypeptide is Glutathione peroxidase homolog BsaA (bsaA) (Staphylococcus aureus (strain COL)).